Here is a 192-residue protein sequence, read N- to C-terminus: Leucine-rich repeat-containing protein 51 (192 aa).

LRR repeat units lie at residues 49-71 (SLTQ…NQVV), 80-101 (NLAW…LTTF), and 103-124 (NLSV…NKLA). The region spanning 137-175 (NPIEEEKGYRQYVLCNLPRITTFDFSGVTRADRSTAEVW) is the LRRCT domain.

As to expression, widely expressed in adult and embryonic tissues. Expressed in the developing choroid plexus from 12.5 dpc and in the epithelium of the developing airway tract from 14.5 dpc. Also expressed in the postnatal inner ear.

The protein localises to the cytoplasm. This Mus musculus (Mouse) protein is Leucine-rich repeat-containing protein 51.